The following is a 362-amino-acid chain: MEPTSEYTETYDYYDTGYNDSGCDYSEWEPSYSLIPVLYMLIFILGLSGNGVVIFTVWRAKSKRRAADVYIGNLALADLTFVITLPLWAVYTALGYHWPFGVALCKISSYVVLVNMYASVFCLTCLSFDRYLAIVHSLSSGRLRSRATMLASLGAIWFLSCLLAVPTLLFRTTVDDTGSNRTTCAMDFSLVTLNQDHESLWIAGLSLSSSALGFLLPFLAMTVCYCFIGCTVTRHFSHLRKEDQKKRRLLKIITTLVVVFAFCWTPFHVLKSMDALSYLDLAPNSCGFLHFLLLAHPYATCLAYVNSCLNPFLYAFFDLRFRSQCLCLLNLKKAMHGHMSSMSSTLSAQTQKSEVQSLATKV.

Residues 1-34 (MEPTSEYTETYDYYDTGYNDSGCDYSEWEPSYSL) lie on the Extracellular side of the membrane. A glycan (N-linked (GlcNAc...) asparagine) is linked at asparagine 19. Intrachain disulfides connect cysteine 23-cysteine 286 and cysteine 105-cysteine 184. Residues 35 to 55 (IPVLYMLIFILGLSGNGVVIF) form a helical membrane-spanning segment. Over 56–73 (TVWRAKSKRRAADVYIGN) the chain is Cytoplasmic. A helical transmembrane segment spans residues 74–94 (LALADLTFVITLPLWAVYTAL). Over 95–106 (GYHWPFGVALCK) the chain is Extracellular. A helical membrane pass occupies residues 107 to 127 (ISSYVVLVNMYASVFCLTCLS). Over 128-149 (FDRYLAIVHSLSSGRLRSRATM) the chain is Cytoplasmic. Residues 150–170 (LASLGAIWFLSCLLAVPTLLF) form a helical membrane-spanning segment. Residues 171 to 211 (RTTVDDTGSNRTTCAMDFSLVTLNQDHESLWIAGLSLSSSA) are Extracellular-facing. N-linked (GlcNAc...) asparagine glycosylation is present at asparagine 180. Residues 212-232 (LGFLLPFLAMTVCYCFIGCTV) traverse the membrane as a helical segment. Residues 233-248 (TRHFSHLRKEDQKKRR) lie on the Cytoplasmic side of the membrane. The chain crosses the membrane as a helical span at residues 249–269 (LLKIITTLVVVFAFCWTPFHV). The Extracellular portion of the chain corresponds to 270–284 (LKSMDALSYLDLAPN). The chain crosses the membrane as a helical span at residues 285–305 (SCGFLHFLLLAHPYATCLAYV). Residues 306-362 (NSCLNPFLYAFFDLRFRSQCLCLLNLKKAMHGHMSSMSSTLSAQTQKSEVQSLATKV) lie on the Cytoplasmic side of the membrane.

This sequence belongs to the G-protein coupled receptor 1 family. As to expression, first expressed before epiboly in dorsal precursors. During epiboly, expressed in the enveloping layer, yolk syncytial layer and migrating mesendoderm. During segmentation stages, expressed in epithelial structures such as adaxial cells, border cells of the newly formed somites, developing lens, otic vesicles and venous vasculature.

Its subcellular location is the cell membrane. In terms of biological role, g protein-coupled receptor for peptide hormones apelin (apln) and apelin receptor early endogenous ligand (apela), that plays a role in the regulation of normal cardiovascular function and fluid homeostasis. When acting as apelin receptor, activates both G(i) protein pathway that inhibits adenylate cyclase activity, and the beta-arrestin pathway that promotes internalization of the receptor. Also functions as mechanoreceptor that is activated by pathological stimuli in a G-protein-independent fashion to induce beta-arrestin signaling, hence eliciting cardiac hypertrophy. However, the presence of apelin ligand blunts cardiac hypertrophic induction from APLNR/APJ on response to pathological stimuli. Plays a key role in early development such as gastrulation, blood vessels formation and heart morphogenesis by acting as a receptor for apela hormone, promoting endoderm and mesendoderm cell migration and regulating the migration of cells fated to become myocardial progenitors, respectively. Positively regulates angioblast migration toward the embryonic midline, i.e. the position of the future vessel formation, during vasculogenesis. May promote sinus venosus (SV)-derived endothelial cells migration into the developing heart to promote coronary blood vessel development. Required for cardiovascular development, particularly for intersomitic vein angiogenesis by acting as a receptor for apln hormone. Also plays a role in various processes in adults such as regulation of blood vessel formation, blood pressure, heart contractility, and heart failure. Acts redundantly with agtrl1b in heart development. This chain is Apelin receptor A (aplnra), found in Danio rerio (Zebrafish).